The chain runs to 97 residues: Pollen allergen Lol p 3 (97 aa).

Residues 14–94 (KTLVLNIKYT…AFTVGKTYTP (81 aa)) enclose the Expansin-like CBD domain.

It belongs to the expansin family. Expansin B subfamily.

The protein localises to the secreted. The chain is Pollen allergen Lol p 3 from Lolium perenne (Perennial ryegrass).